Reading from the N-terminus, the 986-residue chain is Leucine-rich repeat receptor-like kinase protein HAR1 (986 aa).

The signal sequence occupies residues 1 to 25; that stretch reads MRIRVSYLLVLCFTLIWFRWTVVYS. LRR repeat units lie at residues 71 to 97, 98 to 121, 123 to 145, 146 to 170, 171 to 196, 198 to 218, 243 to 267, 268 to 291, 293 to 314, 316 to 339, 340 to 363, 365 to 387, 388 to 411, 412 to 435, 437 to 458, 459 to 482, 483 to 506, 508 to 530, 531 to 554, 555 to 578, and 579 to 603; these read DQNL…IGLL, EKLE…LASL, SLKV…ITVG, MTEL…IVKL, EKLK…EFQS, EFLG…LAKL, MENL…LGNL, TKLH…LSSM, SLMS…SFSK, KNLT…IGDL, PNLE…LGGN, RFLY…LCKS, GRLK…IGEC, RSLT…VFQL, SVTI…VISG, ESLG…MKNL, RALQ…VFEI, MLTK…ITHR, ASLT…MKNL, MDLS…IRFM, and TSLT…QFLV. 5 N-linked (GlcNAc...) asparagine glycosylation sites follow: N80, N102, N109, N128, and N141. N-linked (GlcNAc...) asparagine glycosylation is found at N255, N266, and N279. N-linked (GlcNAc...) asparagine glycosylation is found at N317 and N351. N-linked (GlcNAc...) asparagine glycosylation is found at N513 and N518. 2 N-linked (GlcNAc...) asparagine glycosylation sites follow: N561 and N590. A helical transmembrane segment spans residues 645-665; sequence IVIGIALATAVLLVAVTVHVV. Residues 695–971 enclose the Protein kinase domain; it reads LKEENIIGKG…TMREVVHMLT (277 aa). ATP-binding positions include 701–709 and K723; that span reads IGKGGAGIV. D820 serves as the catalytic Proton acceptor.

The protein belongs to the protein kinase superfamily. Ser/Thr protein kinase family. As to expression, expressed in roots, leaves, stems and flowers.

The protein localises to the cell membrane. It carries out the reaction L-seryl-[protein] + ATP = O-phospho-L-seryl-[protein] + ADP + H(+). It catalyses the reaction L-threonyl-[protein] + ATP = O-phospho-L-threonyl-[protein] + ADP + H(+). Functionally, LRR receptor kinase involved in the regulation of root and shoot growth, and root nodule organogenesis. Involved in long distance nodulation signaling events. Involved in the autoregulation of nodulation (AON), a long distance systemic signaling from root to shoot and back again, which allows legumes to limit the number of root nodules formed based on available nitrogen and previous rhizobial colonization. Acts from shoot to root to control AON. Involved in the regulation of root colonization by arbuscular mycorrhizal (AM) fungi. The sequence is that of Leucine-rich repeat receptor-like kinase protein HAR1 from Lotus japonicus (Lotus corniculatus var. japonicus).